A 135-amino-acid chain; its full sequence is C-type lectin PAL (135 aa).

4 disulfides stabilise this stretch: Cys-3–Cys-14, Cys-31–Cys-131, Cys-38–Cys-133, and Cys-106–Cys-123. The region spanning 10-132 is the C-type lectin domain; the sequence is MNGLCYKIFD…CGSKNAFLCQ (123 aa). Positions 96, 98, 104, 119, and 120 each coordinate Ca(2+). The short motif at 96–98 is the Galactose-binding element; it reads QPD.

The protein belongs to the true venom lectin family. As to quaternary structure, homodimer; disulfide-linked. Expressed by the venom gland.

It localises to the secreted. Functionally, galactose-binding lectin which recognizes specific carbohydrate structures and agglutinates a variety of animal cells by binding to cell-surface glycoproteins and glycolipids. This is a calcium-dependent lectin. Shows high hemagglutinating activity (MHC is 0.25 ug/ml on rabbit erythrocytes). This Bitis arietans (African puff adder) protein is C-type lectin PAL.